The following is a 437-amino-acid chain: MMLRGVHRIFKCFYDVVLVCAFVIALPKLLYKMLVYGKYKKSLAVRFGLKKPHVPGEGPLVWFHGASVGEVRLLLPVLEKFCEEFPGWRCLVTSCTELGVQVASQVFIPMGATVSILPLDFSIIIKSVVAKLRPSLVVFSEGDCWLNFIEEAKRIGATTLVINGRISIDSSKRFKFLKRLGKNYFSPVDGFLLQDEVQKQRFLSLGIPEHKLQVTGNIKTYVAAQTALHLERETWRDRLRLPTDSKLVILGSMHRSDAGKWLPVVQKLIKEGVSVLWVPRHVEKTKDVEESLHRLHIPYGLWSRGANFSYVPVVVVDEIGLLKQLYVAGDLAFVGGTFDPKIGGHNLLEPLQCEVPLIFGPHITSQSELAQRLLLSGAGLCLDEIEPIIDTVSFLLNNQEVREAYVQKGKVFVKAETASFDRTWRALKSYIPLYKNS.

Residues 16-36 (VVLVCAFVIALPKLLYKMLVY) form a helical; Signal-anchor membrane-spanning segment. The active-site Proton acceptor is Glu70. CMP contacts are provided by residues 279–280 (PR), 319–321 (IGL), and 346–349 (NLLE).

The protein belongs to the glycosyltransferase group 1 family. Glycosyltransferase 30 subfamily.

It is found in the cell inner membrane. The enzyme catalyses lipid IVA (E. coli) + CMP-3-deoxy-beta-D-manno-octulosonate = alpha-Kdo-(2-&gt;6)-lipid IVA (E. coli) + CMP + H(+). The catalysed reaction is alpha-Kdo-(2-&gt;6)-lipid IVA (E. coli) + CMP-3-deoxy-beta-D-manno-octulosonate = alpha-Kdo-(2-&gt;4)-alpha-Kdo-(2-&gt;6)-lipid IVA (E. coli) + CMP + H(+). It catalyses the reaction alpha-Kdo-(2-&gt;4)-alpha-Kdo-(2-&gt;6)-lipid IVA (E. coli) + CMP-3-deoxy-beta-D-manno-octulosonate = alpha-Kdo-(2-&gt;8)-alpha-Kdo-(2-&gt;4)-alpha-Kdo-(2-&gt;6)-lipid IVA (E. coli) + CMP + H(+). Its pathway is bacterial outer membrane biogenesis; LPS core biosynthesis. In terms of biological role, involved in lipopolysaccharide (LPS) biosynthesis. Catalyzes the transfer of three 3-deoxy-D-manno-octulosonate (Kdo) residues from CMP-Kdo to lipid IV(A), the tetraacyldisaccharide-1,4'-bisphosphate precursor of lipid A. Thus generates the genus-specific LPS epitope of Chlamydia, composed of the trisaccharide alpha-Kdo-(2-&gt;8)-alpha-Kdo-(2-&gt;4)-alpha-Kdo. This Chlamydia pneumoniae (Chlamydophila pneumoniae) protein is 3-deoxy-D-manno-octulosonic acid transferase (waaA).